Consider the following 241-residue polypeptide: 1-(5-phosphoribosyl)-5-[(5-phosphoribosylamino)methylideneamino] imidazole-4-carboxamide isomerase (241 aa).

Catalysis depends on Asp8, which acts as the Proton acceptor. Asp130 serves as the catalytic Proton donor.

Belongs to the HisA/HisF family.

It localises to the cytoplasm. It carries out the reaction 1-(5-phospho-beta-D-ribosyl)-5-[(5-phospho-beta-D-ribosylamino)methylideneamino]imidazole-4-carboxamide = 5-[(5-phospho-1-deoxy-D-ribulos-1-ylimino)methylamino]-1-(5-phospho-beta-D-ribosyl)imidazole-4-carboxamide. It participates in amino-acid biosynthesis; L-histidine biosynthesis; L-histidine from 5-phospho-alpha-D-ribose 1-diphosphate: step 4/9. In Leptospira borgpetersenii serovar Hardjo-bovis (strain L550), this protein is 1-(5-phosphoribosyl)-5-[(5-phosphoribosylamino)methylideneamino] imidazole-4-carboxamide isomerase.